Consider the following 589-residue polypeptide: Intermediate filament protein ifb-1 (589 aa).

The tract at residues 1 to 42 is disordered; sequence MSSHKESSEYEMQYRSTIQPRTAVRSQSRQSGNYVSGGNGAG. Positions 8–84 are head; sequence SEYEMQYRST…LEATDKEKKT (77 aa). The segment covering 14–30 has biased composition (polar residues); it reads YRSTIQPRTAVRSQSRQ. The 353-residue stretch at 81–433 folds into the IF rod domain; the sequence is EKKTLQGLND…KMLEGEETRV (353 aa). A coil 1A region spans residues 85 to 116; it reads LQGLNDRLGNYIDRVKKLEEQNRKLVADLDEL. The tract at residues 117-130 is linker 1; that stretch reads RGKWGKDTSEIKIK. The segment at 131 to 268 is coil 1B; sequence YSESLSTARK…RVHEQEVKEL (138 aa). Residues 269 to 285 form a linker 12 region; the sequence is QALLAQAPADTREFFKN. The segment at 286 to 433 is coil 2; it reads ELALAIRDIK…KMLEGEETRV (148 aa). The tail stretch occupies residues 434–588; that stretch reads GLTQMVEQAV…THTQKTIQSG (155 aa). Residues 444 to 470 form a disordered region; sequence KTHSLQQQENTDSTRSVRGEVSTKTTF. An LTD domain is found at 466–584; it reads TKTTFQRSAK…EERATHTQKT (119 aa).

This sequence belongs to the intermediate filament family. As to quaternary structure, forms some heteromeric filaments with ifa-1, ifa-2, ifa-3 and probably ifa-4. Expressed in epidermal cells. Expressed in amphid sensory neurons, the excretory cells, the vulva, the uterus, the rectum and some neurons of the tail. Isoform a and isoform b display a similar pattern of expression. Isoform a is predominant in pharyngeal tonofilaments.

It localises to the cytoplasm. Functionally, cytoplasmic intermediate filaments provide mechanical strength to cells. Essential protein, involved in attachment structures in epidermal cells that connect muscles to the external cuticle. Required in morphogenesis and epidermal integrity. Probable component of embryonic epidermal attachment structures. Functions in larval muscle attachment independently of ifa-2. This Caenorhabditis elegans protein is Intermediate filament protein ifb-1 (ifb-1).